A 221-amino-acid chain; its full sequence is MHFLTIYPNCSSGVVRAQSRTEQKNPLGLDDLGIQNLGQTVSLAPAVEAASMLKMEPLNSTHPGTAASSSPLESRAAGGGSGNGNEYFYILVVMSFYGIFLIGIMLGYMKSKRREKKSSLLLLYKDEERLWGEAMKPLPVVSGLRSVQVPLMLNMLQESVAPALSCTLCSMEGDSVSSESSSPDVHLTIQEEGADDELEETSETPLNESSEGSSENIHQNS.

The Extracellular segment spans residues 1–86 (MHFLTIYPNC…AGGGSGNGNE (86 aa)). N-linked (GlcNAc...) asparagine glycosylation is present at N9. Over residues 58-72 (LNSTHPGTAASSSPL) the composition is skewed to polar residues. The interval 58–77 (LNSTHPGTAASSSPLESRAA) is disordered. A helical transmembrane segment spans residues 87–107 (YFYILVVMSFYGIFLIGIMLG). At 108 to 221 (YMKSKRREKK…GSSENIHQNS (114 aa)) the chain is on the cytoplasmic side. Residues 175–221 (SVSSESSSPDVHLTIQEEGADDELEETSETPLNESSEGSSENIHQNS) are disordered. Positions 192-202 (EGADDELEETS) are enriched in acidic residues. The span at 203-221 (ETPLNESSEGSSENIHQNS) shows a compositional bias: polar residues.

The protein belongs to the potassium channel KCNE family. In terms of assembly, forms heterooligomers with KCNA3, inhibiting its activity by impairing localization to the cell membrane. The stoichiometry of KCNA3 and KCNE4 in the heterooligomers are 4:1, 4:2, 4:3 or 4:4 respectively. Increasing the number of KCNE4 subunits steadily slows the activation KCNA3 and decreases its abundance at the cell membrane. However, a single subunit of KCNE4 is sufficient for the cooperative enhancement of the inactivating function of the channel. However, a single subunit of KCNE4 is sufficient for the cooperative enhancement of the inactivating function of the channel. Interacts with KCNQ1; impairs KCNQ1 localization in lipid rafts and inhibits voltage-gated potassium channel activity. Predominantly expressed in embryo and adult uterus. Low expression found in kidney, small intestine, lung and heart. In terms of tissue distribution, detected in kidney, thymus, and uterus (at protein level).

It localises to the membrane. Functionally, ancillary protein that functions as a regulatory subunit of the voltage-gated potassium (Kv) channel complex composed of pore-forming and potassium-conducting alpha subunits and of regulatory beta subunits. KCNE4 beta subunit modulates the gating kinetics and enhances stability of the channel complex. Associates with KCNQ1/KVLTQ1 alpha subunit to inhibit potassium currents. Its function is as follows. May inhibit KCNQ4-mediated potassium currents. This is Potassium voltage-gated channel subfamily E member 4 from Homo sapiens (Human).